The primary structure comprises 428 residues: Autophagy-related protein 14 (428 aa).

A coiled-coil region spans residues 82-143; sequence QEAIDRTAEI…RKKQLDKVKD (62 aa).

The protein belongs to the ATG14 family. As to quaternary structure, component of the autophagy-specific VPS34 PI3-kinase complex I.

It is found in the preautophagosomal structure membrane. It localises to the vacuole membrane. Required for cytoplasm to vacuole transport (Cvt) and autophagy as a part of the autophagy-specific VPS34 PI3-kinase complex I. This complex is essential to recruit the ATG8-phosphatidylinositol conjugate and the ATG12-ATG5 conjugate to the pre-autophagosomal structure. ATG14 mediates the specific binding of the VPS34 PI3-kinase complex I to the preautophagosomal structure (PAS). Plays a crucial role in hyphal development, conidiogenesis and pathogenicity. Also required for glycogen mobilization, quantity of lipid bodies, and the turgor pressure of appressoria. This is Autophagy-related protein 14 from Pyricularia oryzae (strain 70-15 / ATCC MYA-4617 / FGSC 8958) (Rice blast fungus).